The following is a 318-amino-acid chain: MIVVTGGAGFIGANLVKALNARGREDVLVVDDLSDGTKFVNLADCTLGDYLDKDDFLARVKAELRGEPSELPPIEAIFHEGACSDTTEWDGKFMLENNFEYSKVLLHFCQYKRIPFLYASSAATYGGSEVFVEAPEHEKPLNVYGYSKLLFDQYVRVHWESFDAQVVGFRYFNVYGPREQHKGKMASVAYHHHSQVKRGENPKLFGAWDGYEAGMQSRDFVYVGDVVDVNLWCLDHPEVSGIFNLGTGRAEPFKAIAETVIDYYATGKIDYIDFPEELKGRYQSYTRADISRLREAGYKAEFKTVREGVSAYLDWLNG.

Residues 10–11, 31–32, Lys38, Lys53, 80–84, and Asn97 each bind NADP(+); these read FI, DD, and EGACS. Catalysis depends on Tyr144, which acts as the Proton acceptor. An NADP(+)-binding site is contributed by Lys148. Asn173 contacts substrate. Residues Val174 and Lys182 each coordinate NADP(+). The Proton acceptor role is filled by Lys182. Substrate-binding positions include Lys184, His191, 205-208, Arg218, and Tyr282; that span reads FGAW.

This sequence belongs to the NAD(P)-dependent epimerase/dehydratase family. HldD subfamily. As to quaternary structure, homopentamer. Requires NADP(+) as cofactor.

The enzyme catalyses ADP-D-glycero-beta-D-manno-heptose = ADP-L-glycero-beta-D-manno-heptose. It participates in nucleotide-sugar biosynthesis; ADP-L-glycero-beta-D-manno-heptose biosynthesis; ADP-L-glycero-beta-D-manno-heptose from D-glycero-beta-D-manno-heptose 7-phosphate: step 4/4. In terms of biological role, catalyzes the interconversion between ADP-D-glycero-beta-D-manno-heptose and ADP-L-glycero-beta-D-manno-heptose via an epimerization at carbon 6 of the heptose. This chain is ADP-L-glycero-D-manno-heptose-6-epimerase, found in Chromohalobacter salexigens (strain ATCC BAA-138 / DSM 3043 / CIP 106854 / NCIMB 13768 / 1H11).